Reading from the N-terminus, the 95-residue chain is Co-chaperonin GroES (95 aa).

Belongs to the GroES chaperonin family. As to quaternary structure, heptamer of 7 subunits arranged in a ring. Interacts with the chaperonin GroEL.

The protein resides in the cytoplasm. Functionally, together with the chaperonin GroEL, plays an essential role in assisting protein folding. The GroEL-GroES system forms a nano-cage that allows encapsulation of the non-native substrate proteins and provides a physical environment optimized to promote and accelerate protein folding. GroES binds to the apical surface of the GroEL ring, thereby capping the opening of the GroEL channel. The sequence is that of Co-chaperonin GroES from Xylella fastidiosa (strain M12).